We begin with the raw amino-acid sequence, 762 residues long: MRFNQYSYAKTKRENMLIELAELGFFYDSNRSDKENLEDFLRTSFFTYKNTDYPLKSWAADSQTDLLSFFQSDRELTASVFYTVAFQLLEFSPFIDFTDVEAFRQETDFPITFGDLLENLYQLLNTRTKNGNLLIDKLVSEGLIPEDNTHHCFNGKSLATFSSHDAIREVVYVESRVDTDQDGRPDLIKVSIIRPRYQGPVPAVMTASPYHQGTNDPASDKALHDMNVDLAKKEPHQITVQDPELKLLQLDSPVPAQEVSETEEKLGHIGTYTLNDYLLPRGFANLYVSGVGTKDSEGLMTSGDYQQIEAYKNVIDWLNGRCRAFTDHTRQREIKATWSNGKVATTGISYLGTMSNGLATTGVDGLEVIIAEAGISSWYNYYRENGLVTSPGGYPGEDFESLTELTYSRNLRAGDYLRNNDAYQQNLEQQRKDLDRQTGDYNQFWHDRNYLLHADKVKAEVVFTHGSQDWNVKPLHVYNMFRALPPHIKKHLFFHNGAHVYMNNWQSIDFRESINALLSKKLLGCESDFVLPAVIWQDNSQAQSWLTLEDFGGQEQNLHLQLGQDCQSIQNQYSEEDYNRFAKNYQSFKTELFDGKVNQITLDWTLEKDLFLNGATQLNLRLKSSTDKGLISAQLLDFGLAKRHTPIPTPIEPRVMDNGRYYMLDNLVELPFAETPHRVITKGFLNLQNRTNLLSVEEVTPDQWLEFSFELQPTIYKMKKGDQLRLVLYTTDFEHTVRDKIDYQLTVDLEQSSLDLPTMTSH.

Catalysis depends on charge relay system residues Ser349, Asp469, and His499.

This sequence belongs to the peptidase S15 family. In terms of assembly, homodimer.

It is found in the cytoplasm. The catalysed reaction is Hydrolyzes Xaa-Pro-|- bonds to release unblocked, N-terminal dipeptides from substrates including Ala-Pro-|-p-nitroanilide and (sequentially) Tyr-Pro-|-Phe-Pro-|-Gly-Pro-|-Ile.. Functionally, removes N-terminal dipeptides sequentially from polypeptides having unsubstituted N-termini provided that the penultimate residue is proline. This Streptococcus sanguinis (strain SK36) protein is Xaa-Pro dipeptidyl-peptidase.